Reading from the N-terminus, the 477-residue chain is MNSPALPLSRGLRIRAELKELLTLAAPIMIAQLATTAMGFVDAVMAGRASPHDLAAVALGNSIWIPMFLLMTGTLLATTAKVAQRHGAGDQPGTGPLVRQALWLALLIGPLSGAVLWWLSEPILGLMKVRPELIGPSLLYLKGIALGFPAAALYHVLRCYTNGLGRTRPSMVLGIGGLLLNIPINYALIYGHFGMPKMGGPGCGWATGSVMWFMFLGMLFWVNKASIYRASQLFSRWEWPDRATIGPLVAVGLPIGIAVFAESSIFSVIALLIGGLDENVVAGHQIALNFSALVFMIPYSLGMAVTVRVGHNLGAGLPRDARFAAGVGMAAALGYACVSASLMLLLREQIAAMYSPDPAVIAIAASLIVFSALFQFSDALQVTAAGALRGYQDTRVTMIMTLFAYWGIGLPVGYSLGLTDWFQEPTGPRGLWQGLVVGLTGAAIMLCIRLARSARRFIRQHERLQREDAEAASVLGR.

The next 12 helical transmembrane spans lie at 21-41 (LLTLAAPIMIAQLATTAMGFV), 56-76 (AVALGNSIWIPMFLLMTGTLL), 104-124 (LALLIGPLSGAVLWWLSEPIL), 133-153 (LIGPSLLYLKGIALGFPAAAL), 171-191 (MVLGIGGLLLNIPINYALIYG), 202-222 (GCGWATGSVMWFMFLGMLFWV), 253-273 (LPIGIAVFAESSIFSVIALLI), 286-306 (IALNFSALVFMIPYSLGMAVT), 326-346 (GVGMAAALGYACVSASLMLLL), 360-380 (VIAIAASLIVFSALFQFSDAL), 398-418 (MIMTLFAYWGIGLPVGYSLGL), and 431-451 (LWQGLVVGLTGAAIMLCIRLA).

Belongs to the multi antimicrobial extrusion (MATE) (TC 2.A.66.1) family.

The protein resides in the cell inner membrane. Multidrug efflux pump that functions as an H(+)/drug antiporter. Confers resistance to benzalkonium chloride, fluoroquinolones, ethidium bromide, acriflavine and tetraphenylphosphonium chloride. The sequence is that of Multidrug resistance protein PmpM (pmpM) from Pseudomonas aeruginosa (strain ATCC 15692 / DSM 22644 / CIP 104116 / JCM 14847 / LMG 12228 / 1C / PRS 101 / PAO1).